We begin with the raw amino-acid sequence, 805 residues long: Transitional endoplasmic reticulum ATPase (805 aa).

S3 bears the Phosphoserine mark. ATP is bound by residues 247–253, N348, H384, and 521–526; these read PGTGKTL and GCGKTL. Residues 768-805 form a disordered region; sequence FGSFRFPAGGQGGAGPSQGAGGGSGGSHFNEEEDDLYG. Gly residues predominate over residues 776-793; the sequence is GGQGGAGPSQGAGGGSGG.

It belongs to the AAA ATPase family. As to quaternary structure, homohexamer. Forms a ring-shaped particle of 12.5 nm diameter, that displays 6-fold radial symmetry. Interacts with the FACT/DUF complex, which includes subunits ssrp1/duf87 and supt16h/duf140. Phosphorylated.

Its subcellular location is the cytoplasm. It localises to the cytosol. It is found in the endoplasmic reticulum. The protein resides in the nucleus. The protein localises to the stress granule. It carries out the reaction ATP + H2O = ADP + phosphate + H(+). Its activity is regulated as follows. ATPase activity is inhibited or reduced by lowering pH from 9.0 to 7.0, and by addition of Ca(2+), EDTA, KNO(3) or by treatment with N-ethylmaleimide (NEM). Its function is as follows. Necessary for the fragmentation of Golgi stacks during mitosis and for their reassembly after mitosis. Involved in the formation of the nuclear envelope, and of the transitional endoplasmic reticulum (tER). The transfer of membranes from the endoplasmic reticulum to the Golgi apparatus occurs via 50-70 nm transition vesicles which derive from part-rough, part-smooth transitional elements of the endoplasmic reticulum (tER). Vesicle budding from the tER is an ATP-dependent process. Involved in endoplasmic reticulum stress-induced pre-emptive quality control, a mechanism that selectively attenuates the translocation of newly synthesized proteins into the endoplasmic reticulum and reroutes them to the cytosol for proteasomal degradation. Involved in clearance process by mediating G3BP1 extraction from stress granules. Also involved in DNA damage response: recruited to double-strand breaks (DSBs) sites and promotes the recruitment of tp53bp1 at DNA damage sites. Together with sprtn metalloprotease, involved in the repair of covalent DNA-protein cross-links (DPCs) during DNA synthesis. Involved in interstrand cross-link repair in response to replication stress by mediating unloading of the ubiquitinated CMG helicase complex. Enhances cell cycle progression and inhibits apoptosis at low temperatures. Essential for the maturation of ubiquitin-containing autophagosomes and the clearance of ubiquitinated protein by autophagy. Acts as a negative regulator of type I interferon production by promoting ubiquitination of rigi. May play a role in the ubiquitin-dependent sorting of membrane proteins to lysosomes where they undergo degradation. May more particularly play a role in caveolins sorting in cells. By controlling the steady-state expression of the IGF1R receptor, indirectly regulates the insulin-like growth factor receptor signaling pathway. The sequence is that of Transitional endoplasmic reticulum ATPase from Xenopus tropicalis (Western clawed frog).